The sequence spans 444 residues: Phosphoglucosamine mutase (444 aa).

Ser104 serves as the catalytic Phosphoserine intermediate. 4 residues coordinate Mg(2+): Ser104, Asp243, Asp245, and Asp247. A Phosphoserine modification is found at Ser104.

The protein belongs to the phosphohexose mutase family. Mg(2+) is required as a cofactor. Post-translationally, activated by phosphorylation.

It carries out the reaction alpha-D-glucosamine 1-phosphate = D-glucosamine 6-phosphate. Catalyzes the conversion of glucosamine-6-phosphate to glucosamine-1-phosphate. The polypeptide is Phosphoglucosamine mutase (Neisseria meningitidis serogroup C / serotype 2a (strain ATCC 700532 / DSM 15464 / FAM18)).